Here is a 213-residue protein sequence, read N- to C-terminus: C-type lectin domain family 4 member C (213 aa).

Residues M1–V21 are Cytoplasmic-facing. A helical; Signal-anchor for type II membrane protein membrane pass occupies residues W22–H44. At N45–I213 the chain is on the extracellular side. Disulfide bonds link C70–C82 and C83–C94. Residues F90–K207 enclose the C-type lectin domain. N-linked (GlcNAc...) asparagine glycans are attached at residues N110 and N137. 2 disulfide bridges follow: C111-C206 and C180-C198. S139 lines the a carbohydrate pocket. N164 carries N-linked (GlcNAc...) asparagine glycosylation. Residues E172, N174, and E178 each coordinate Ca(2+). Residues E178, N184–R186, N194, N194–D195, and Q202 contribute to the a carbohydrate site. Ca(2+) is bound by residues N194 and D195.

As to quaternary structure, homodimer. In terms of tissue distribution, expressed in plasmacytoid dendritic cells (PDCs). Constitutively expressed in immature monocyte-derived dendritic cells (iMDDC) and is significantly down-regulated upon maturation with LPS but not with TNF-alpha.

It is found in the cell membrane. In terms of biological role, lectin-type cell surface receptor which may play a role in antigen capturing by dendritic cells. Specifically recognizes non-sialylated galactose-terminated biantennary glycans containing the trisaccharide epitope Gal(beta1-3/4)GlcNAc(beta1-2)Man. Binds to serum IgG. Efficiently targets ligand into antigen-processing and peptide-loading compartments for presentation to T-cells. May mediate potent inhibition of induction of IFN-alpha/beta expression in plasmacytoid dendritic cells. May act as a signaling receptor that activates protein-tyrosine kinases and mobilizes intracellular calcium. The chain is C-type lectin domain family 4 member C (CLEC4C) from Homo sapiens (Human).